We begin with the raw amino-acid sequence, 290 residues long: Shikimate dehydrogenase (NADP(+)) (290 aa).

Shikimate contacts are provided by residues 22–24 and Thr68; that span reads SLS. The active-site Proton acceptor is Lys72. Shikimate contacts are provided by Asn93 and Asp108. Residues 133–137 and Ile228 contribute to the NADP(+) site; that span reads GSGGS. Tyr230 is a shikimate binding site. Gly251 contacts NADP(+).

It belongs to the shikimate dehydrogenase family. Homodimer.

The catalysed reaction is shikimate + NADP(+) = 3-dehydroshikimate + NADPH + H(+). It participates in metabolic intermediate biosynthesis; chorismate biosynthesis; chorismate from D-erythrose 4-phosphate and phosphoenolpyruvate: step 4/7. Functionally, involved in the biosynthesis of the chorismate, which leads to the biosynthesis of aromatic amino acids. Catalyzes the reversible NADPH linked reduction of 3-dehydroshikimate (DHSA) to yield shikimate (SA). In Leptospira borgpetersenii serovar Hardjo-bovis (strain JB197), this protein is Shikimate dehydrogenase (NADP(+)).